The sequence spans 1280 residues: SET and MYND domain-containing protein DDB_G0284059 (1280 aa).

Disordered stretches follow at residues Met1 to His35 and Ile111 to Gln167. Composition is skewed to low complexity over residues Asn16–Asn25 and Glu117–Pro153. TPR repeat units lie at residues Ser272–Glu305 and His383–Arg416. The stretch at Gln439–Gln468 forms a coiled coil. Positions 533, 536, 546, 549, 555, 559, 568, and 572 each coordinate Zn(2+). The MYND-type zinc-finger motif lies at Cys533–Cys572. Disordered regions lie at residues Ala601 to Asn642, Ala659 to Thr726, Gln854 to Pro905, and Ala1039 to Asn1079. Composition is skewed to low complexity over residues Ala659–Glu697, Ser712–Thr726, Gln854–Pro898, Gln1042–Gln1053, and Asn1061–Asn1079. The SET domain maps to Cys822 to Gly965. The stretch at Gly1218–Trp1251 is one TPR 3 repeat.

It belongs to the class V-like SAM-binding methyltransferase superfamily.

Probable methyltransferase. In Dictyostelium discoideum (Social amoeba), this protein is SET and MYND domain-containing protein DDB_G0284059.